A 194-amino-acid polypeptide reads, in one-letter code: PRELI domain containing protein 3B (194 aa).

The PRELI/MSF1 domain maps to 1–172; sequence MKIWTSEHVF…VIHKLNAEIE (172 aa). Phosphoserine is present on residues serine 46 and serine 51.

This sequence belongs to the slowmo family.

The protein is PRELI domain containing protein 3B (PRELID3B) of Macaca fascicularis (Crab-eating macaque).